We begin with the raw amino-acid sequence, 509 residues long: UDP-N-acetylmuramyl-tripeptide synthetase (509 aa).

124-130 (GTNGKTS) is a binding site for ATP. UDP-N-acetyl-alpha-D-muramoyl-L-alanyl-D-glutamate-binding positions include 164 to 165 (TT), S191, and R199. The residue at position 231 (K231) is an N6-carboxylysine.

The protein belongs to the MurCDEF family. MurE subfamily. In terms of processing, carboxylation is probably crucial for Mg(2+) binding and, consequently, for the gamma-phosphate positioning of ATP.

It localises to the cytoplasm. Its pathway is cell wall biogenesis; peptidoglycan biosynthesis. Functionally, catalyzes the addition of an amino acid to the nucleotide precursor UDP-N-acetylmuramoyl-L-alanyl-D-glutamate (UMAG) in the biosynthesis of bacterial cell-wall peptidoglycan. This chain is UDP-N-acetylmuramyl-tripeptide synthetase, found in Tropheryma whipplei (strain TW08/27) (Whipple's bacillus).